The chain runs to 230 residues: CASP-like protein 2A2 (230 aa).

The tract at residues Met1 to Val23 is disordered. Over Met1 to Thr29 the chain is Cytoplasmic. Residues Ala30–Leu50 traverse the membrane as a helical segment. Residues Lys51–Tyr71 are Extracellular-facing. The helical transmembrane segment at Leu72–Met92 threads the bilayer. The Cytoplasmic portion of the chain corresponds to Pro93 to Gln100. The chain crosses the membrane as a helical span at residues Ala101–Val121. Residues Ser122–Lys151 are Extracellular-facing. The helical transmembrane segment at Ala152 to Val172 threads the bilayer. The Cytoplasmic portion of the chain corresponds to Ser173–Asn230.

The protein belongs to the Casparian strip membrane proteins (CASP) family. As to quaternary structure, homodimer and heterodimers.

The protein localises to the cell membrane. This Populus trichocarpa (Western balsam poplar) protein is CASP-like protein 2A2.